A 371-amino-acid chain; its full sequence is Probable G protein-coupled receptor 85 (371 aa).

At 1-26 the chain is on the extracellular side; that stretch reads MANYSHAGDHNILQNVSPLATFLKLT. Residue asparagine 3 is glycosylated (N-linked (GlcNAc...) asparagine). Residues 27-47 traverse the membrane as a helical segment; that stretch reads SLGFIIGVGVVGNLLISILLV. Residues 48–58 are Cytoplasmic-facing; the sequence is KDKSLHRAPYY. A helical transmembrane segment spans residues 59–79; sequence FLLDLCASDILRSAICFPFVF. The Extracellular segment spans residues 80–96; sequence TSVKNGSAWTYGTLTCK. The N-linked (GlcNAc...) asparagine glycan is linked to asparagine 84. An intrachain disulfide couples cysteine 95 to cysteine 173. A helical transmembrane segment spans residues 97-117; sequence VIAFLGVLSCFHTAFMLFCVS. At 118-138 the chain is on the cytoplasmic side; that stretch reads VTRYLAIAHHRFYTKRLTFWT. The helical transmembrane segment at 139–159 threads the bilayer; sequence CLAVICMVWTLSVAMAFPPVL. The Extracellular segment spans residues 160-189; sequence DVGTYSFIREEDQCTFQHRSFRANDSLGFM. N-linked (GlcNAc...) asparagine glycosylation occurs at asparagine 183. A helical membrane pass occupies residues 190-210; sequence LLLALILLATQLVYLKLIFFV. Over 211–287 the chain is Cytoplasmic; the sequence is HDRRKMKPVQ…FKTEKRISRM (77 aa). The helical transmembrane segment at 288-308 threads the bilayer; the sequence is FYIITFFFLSLWGPYLVACYW. Over 309–321 the chain is Extracellular; sequence RVFARGPVIPGGY. A helical membrane pass occupies residues 322–342; sequence LTAAVWMSFAQAGVNPFICIF. Residues 343 to 371 lie on the Cytoplasmic side of the membrane; the sequence is SNRELRRCFSTTLLYCRKSRLPREPYCVI.

The protein belongs to the G-protein coupled receptor 1 family.

Its subcellular location is the cell membrane. Orphan receptor. This chain is Probable G protein-coupled receptor 85 (gpr85), found in Danio rerio (Zebrafish).